A 132-amino-acid chain; its full sequence is Small ribosomal subunit protein uS8 (132 aa).

It belongs to the universal ribosomal protein uS8 family. As to quaternary structure, part of the 30S ribosomal subunit. Contacts proteins S5 and S12.

Its function is as follows. One of the primary rRNA binding proteins, it binds directly to 16S rRNA central domain where it helps coordinate assembly of the platform of the 30S subunit. The chain is Small ribosomal subunit protein uS8 from Mycobacterium avium (strain 104).